A 687-amino-acid polypeptide reads, in one-letter code: Pre-mRNA-splicing factor CLF1 (687 aa).

HAT repeat units follow at residues 45–77 (EYQR…FEIE), 79–111 (HDMR…AELK), 113–145 (KCIN…VEES), 147–178 (NNVE…FEIR), 180–211 (KNWN…FENR), 213–247 (GNTE…AKLV), 251–283 (AHWE…LKAG), 300–332 (TISY…LISE), 337–369 (QIMQ…LWMR), 383–416 (LEEE…FLIR), 451–483 (KEFD…LEEN), 525–557 (QEFE…YQTS), and 629–661 (LDQE…YIFP).

The protein belongs to the crooked-neck family. Belongs to the NTC complex (or PRP19-associated complex), composed of at least CEF1, CLF1, ISY1, NTC20, SNT309, SYF1, SYF2, and PRP19. The NTC complex associates with the spliceosome after the release of the U1 and U4 snRNAs and forms the CWC spliceosome subcomplex (or CEF1-associated complex) reminiscent of a late-stage spliceosome composed also of the U2, U5 and U6 snRNAs and at least BUD13, BUD31, BRR2, CDC40, CUS1, CWC2, CWC15, CWC21, CWC22, CWC23, CWC24, CWC25, CWC27, ECM2, HSH155, IST3, LEA1, MSL1, PRP8, PRP9, PRP11, PRP21, PRP22, PRP45, PRP46, SLU7, SMB1, SMD1, SMD2, SMD3, SMX2, SMX3, SNU114, SPP2, RSE1 and YJU2. Interacts with CEF1, ISY1, MUD2, NTC20, PRP22, PRP40, PRP46, SYF1, SYF2, and the ORC2 subunit of the origin recognition complex.

The protein resides in the nucleus. In terms of biological role, involved in pre-mRNA splicing and cell cycle progression. Required for the spliceosome assembly by promoting the functional integration of the U4/U6.U5 tri-snRNP particle into the U1-, U2-dependent pre-spliceosome. Also recruits PRP19 to the spliceosome, as a component of the NTC complex (or PRP19-associated complex). The association of the NTC complex to the spliceosome mediates conformational rearrangement or stabilizes the structure of the spliceosome after U4 snRNA dissociation, which leads to spliceosome maturation. Required for initiation of the DNA replication by binding the RNA replication origins, probably through its interaction with the origin recognition complex (ORC). This is Pre-mRNA-splicing factor CLF1 (CLF1) from Saccharomyces cerevisiae (strain ATCC 204508 / S288c) (Baker's yeast).